Reading from the N-terminus, the 309-residue chain is Ornithine carbamoyltransferase (309 aa).

Carbamoyl phosphate is bound by residues 57-60 (STRT), Q84, R108, and 135-138 (HPCQ). Residues N166, D224, and 228–229 (SM) contribute to the L-ornithine site. Residues 264-265 (CL) and R292 contribute to the carbamoyl phosphate site.

This sequence belongs to the aspartate/ornithine carbamoyltransferase superfamily. OTCase family.

Its subcellular location is the cytoplasm. The enzyme catalyses carbamoyl phosphate + L-ornithine = L-citrulline + phosphate + H(+). It functions in the pathway amino-acid biosynthesis; L-arginine biosynthesis; L-arginine from L-ornithine and carbamoyl phosphate: step 1/3. In terms of biological role, reversibly catalyzes the transfer of the carbamoyl group from carbamoyl phosphate (CP) to the N(epsilon) atom of ornithine (ORN) to produce L-citrulline. The protein is Ornithine carbamoyltransferase of Paracidovorax citrulli (strain AAC00-1) (Acidovorax citrulli).